The sequence spans 340 residues: Insulin gene enhancer protein ISL-2B (340 aa).

LIM zinc-binding domains are found at residues 9 to 62 (CVGC…CKRD) and 71 to 125 (CAKC…RADH). Residues 172 to 231 (TTRVRTVLNEKQLHTLRTCYNANPRPDALMKEQLVEMTGLSPRVIRVWFQNKRCKDKKRT) constitute a DNA-binding region (homeobox). The span at 307-317 (ESGSMGNSSGS) shows a compositional bias: low complexity. The tract at residues 307–340 (ESGSMGNSSGSDVTSLSSQLPDTPNSMVPSPMDT) is disordered. Residues 318-340 (DVTSLSSQLPDTPNSMVPSPMDT) show a composition bias toward polar residues.

The protein resides in the nucleus. In terms of biological role, binds to one of the cis-acting domain of the insulin gene enhancer. May be involved in subtype specialization of primary motoneurons. In Oncorhynchus tshawytscha (Chinook salmon), this protein is Insulin gene enhancer protein ISL-2B (isl2b).